The primary structure comprises 384 residues: Putative F-box/kelch-repeat protein At3g27910 (384 aa).

The F-box domain maps to 27-79 (SPTSLPLPDEIIVNCFAYIPRCDYPSLSLVSKTFNRLITSIELNIVRSLFQRT). Kelch repeat units follow at residues 138 to 184 (KIYV…IVDG), 185 to 235 (KIYV…VMNK), 237 to 274 (IYIM…VIDN), and 275 to 323 (MLYT…MANH).

The protein is Putative F-box/kelch-repeat protein At3g27910 of Arabidopsis thaliana (Mouse-ear cress).